A 95-amino-acid polypeptide reads, in one-letter code: Aspartyl/glutamyl-tRNA(Asn/Gln) amidotransferase subunit C (95 aa).

Belongs to the GatC family. Heterotrimer of A, B and C subunits.

It catalyses the reaction L-glutamyl-tRNA(Gln) + L-glutamine + ATP + H2O = L-glutaminyl-tRNA(Gln) + L-glutamate + ADP + phosphate + H(+). The catalysed reaction is L-aspartyl-tRNA(Asn) + L-glutamine + ATP + H2O = L-asparaginyl-tRNA(Asn) + L-glutamate + ADP + phosphate + 2 H(+). Allows the formation of correctly charged Asn-tRNA(Asn) or Gln-tRNA(Gln) through the transamidation of misacylated Asp-tRNA(Asn) or Glu-tRNA(Gln) in organisms which lack either or both of asparaginyl-tRNA or glutaminyl-tRNA synthetases. The reaction takes place in the presence of glutamine and ATP through an activated phospho-Asp-tRNA(Asn) or phospho-Glu-tRNA(Gln). The chain is Aspartyl/glutamyl-tRNA(Asn/Gln) amidotransferase subunit C from Geobacter sp. (strain M21).